The primary structure comprises 111 residues: MVLLHPILAESCTRYFLLLPSYTHPNHLFHFPSISFFFFFFFFFFSFRRNCLFRIVKDEVKYSGVYYYIHTKQDKETFLDLTFYFNCFCIPYNKKDLLFNVGVIRPLLDLQ.

A helical transmembrane segment spans residues 27-47 (HLFHFPSISFFFFFFFFFFSF).

Its subcellular location is the membrane. This is an uncharacterized protein from Saccharomyces cerevisiae (strain ATCC 204508 / S288c) (Baker's yeast).